A 394-amino-acid chain; its full sequence is Putative FNIP repeat-containing protein R636 (394 aa).

3 FNIP repeats span residues 126–167 (FNKS…FSVY), 168–207 (FDQPVVGYLPTRLTHLIFGTDFNQPIKGALPDTLEYLYFG), and 210–250 (FNQP…IFEA).

The protein is Putative FNIP repeat-containing protein R636 of Acanthamoeba polyphaga mimivirus (APMV).